A 261-amino-acid polypeptide reads, in one-letter code: MEGGLGRAVCLLTGASRGFGRTLAPLLASLLSPGSVLVLSARNDEALRQLEAELGAERSGLRVVRVPADLGAEAGLQQLLGALRELPRPKGLQRLLLINNAGSLGDVSKGFVDLSDSTQVNNYWALNLTSMLCLTSSVLKAFPDSPGLNRTVVNISSLCALQPFKGWALYCAGKAARDMLFQVLALEEPNVRVLNYAPGPLDTDMQQLARETSVDPDMRKGLQELKAKGKLVDCKVSAQKLLSLLEKDEFKSGAHVDFYDK.

Met1 carries the N-acetylmethionine modification. 14-20 is a binding site for NADP(+); sequence GASRGFG. A Phosphoserine modification is found at Ser32. NADP(+)-binding positions include 42 to 43 and 69 to 70; these read RN and DL. Residue Ser103 is modified to Phosphoserine. Substrate is bound by residues 157 to 158 and Tyr170; that span reads SL. Lys174 contacts NADP(+). Residue Gly199 coordinates substrate. 201–206 serves as a coordination point for NADP(+); it reads LDTDMQ. Ser213 is subject to Phosphoserine; by CaMK2; in vitro. Position 257 (Asp257) interacts with substrate.

This sequence belongs to the sepiapterin reductase family. As to quaternary structure, homodimer. Post-translationally, in vitro phosphorylation of Ser-213 by CaMK2 does not change kinetic parameters.

Its subcellular location is the cytoplasm. The enzyme catalyses L-erythro-7,8-dihydrobiopterin + NADP(+) = L-sepiapterin + NADPH + H(+). The catalysed reaction is (6R)-L-erythro-5,6,7,8-tetrahydrobiopterin + 2 NADP(+) = 6-pyruvoyl-5,6,7,8-tetrahydropterin + 2 NADPH + 2 H(+). Functionally, catalyzes the final one or two reductions in tetra-hydrobiopterin biosynthesis to form 5,6,7,8-tetrahydrobiopterin. The protein is Sepiapterin reductase (SPR) of Homo sapiens (Human).